Reading from the N-terminus, the 317-residue chain is Trem-like transcript 1 protein (317 aa).

The signal sequence occupies residues 1 to 20; sequence MDCYLLLLLLLLGLAGQGSA. Residues 21 to 122 enclose the Ig-like V-type domain; it reads DSHPEVLQAP…PQTLHRVSLL (102 aa). The Extracellular portion of the chain corresponds to 21 to 175; that stretch reads DSHPEVLQAP…EFRRRENSIP (155 aa). Disulfide bonds link C39/C105 and C53/C60. The disordered stretch occupies residues 147-166; that stretch reads TGSLLEDPSLDPSASAGPHE. Residues 176-196 form a helical membrane-spanning segment; the sequence is LIWGAVLLLALVVVAVVIFAV. Residues 197–317 lie on the Cytoplasmic side of the membrane; that stretch reads MARKKGNRLV…PPNSQTPPSK (121 aa). The S-palmitoyl cysteine moiety is linked to residue C208. A disordered region spans residues 212-278; sequence QSTGVPGMDP…SQPPLPPKVL (67 aa). A compositionally biased stretch (pro residues) spans 261–275; the sequence is SSEPPAPPSQPPLPP. The residue at position 283 (S283) is a Phosphoserine. The ITIM signature appears at 284–289; it reads VTYATV. Positions 295–317 are disordered; sequence DKGKIASCEPVQDPPNSQTPPSK. The span at 308 to 317 shows a compositional bias: polar residues; that stretch reads PPNSQTPPSK.

When phosphorylated, interacts with PTPN11. When phosphorylated, interacts with PTPN6. In terms of processing, phosphorylated on tyrosine residues. In terms of tissue distribution, highly expressed in bone marrow leukocytes, splenic megakaryocytes and platelets. Detected in brain, liver and in peritoneal monocytes.

The protein resides in the cell membrane. It is found in the cytoplasm. Its function is as follows. Cell surface receptor that may play a role in the innate and adaptive immune response. The sequence is that of Trem-like transcript 1 protein (Treml1) from Mus musculus (Mouse).